A 296-amino-acid chain; its full sequence is NADH-cytochrome b5 reductase 2-A (296 aa).

Residues 15 to 35 form a helical membrane-spanning segment; the sequence is FVIGAPTIALCSYYYSSGAFL. The FAD-binding FR-type domain occupies 47 to 151; sequence NNWIDLPISR…KGPIPKWKWV (105 aa). 154–189 is a binding site for FAD; the sequence is SFESITLIGGGTGITPLYQLIHAITKNPNDKTKIRL.

Belongs to the flavoprotein pyridine nucleotide cytochrome reductase family. It depends on FAD as a cofactor.

The protein resides in the mitochondrion outer membrane. The catalysed reaction is 2 Fe(III)-[cytochrome b5] + NADH = 2 Fe(II)-[cytochrome b5] + NAD(+) + H(+). May mediate the reduction of outer membrane cytochrome b5. The chain is NADH-cytochrome b5 reductase 2-A (MCR1A) from Vanderwaltozyma polyspora (strain ATCC 22028 / DSM 70294 / BCRC 21397 / CBS 2163 / NBRC 10782 / NRRL Y-8283 / UCD 57-17) (Kluyveromyces polysporus).